Consider the following 174-residue polypeptide: Inactive signal peptidase IA (174 aa).

At 1-7 the chain is on the cytoplasmic side; the sequence is MKKVVKY. Residues 8–28 form a helical membrane-spanning segment; that stretch reads LISLILAIIIVLFVQTFVIVG. Topologically, residues 29–174 are extracellular; it reads HVIPNNDMSP…FSKWTIQFKS (146 aa).

It belongs to the peptidase S26 family.

It is found in the cell membrane. Functionally, catalytically inactive. This Staphylococcus aureus (strain Mu50 / ATCC 700699) protein is Inactive signal peptidase IA (spsA).